The sequence spans 909 residues: Probable dipeptidyl-aminopeptidase B (909 aa).

The tract at residues 1-63 (MRVGSRINDE…HNHNGRAQGN (63 aa)) is disordered. Residues 1-94 (MRVGSRINDE…NGKSNQRRTL (94 aa)) are Cytoplasmic-facing. Positions 27-38 (DSSSTASISLTL) are enriched in low complexity. A helical; Signal-anchor for type II membrane protein transmembrane segment spans residues 95 to 115 (IVFWLLVALCVGGWAVAFLFF). Topologically, residues 116–909 (VTSPGNKTST…YSNFLPIRSF (794 aa)) are vacuolar. Asn121 carries N-linked (GlcNAc...) asparagine glycosylation. Positions 123–134 (TSTSPHSGSNSP) are enriched in polar residues. Residues 123–144 (TSTSPHSGSNSPEGDVTKPGIP) are disordered. N-linked (GlcNAc...) asparagine glycosylation is found at Asn207, Asn303, and Asn355. The active-site Charge relay system is Ser760. Residues Asn814, Asn819, and Asn822 are each glycosylated (N-linked (GlcNAc...) asparagine). Active-site charge relay system residues include Asp837 and His870. An N-linked (GlcNAc...) asparagine glycan is attached at Asn888.

This sequence belongs to the peptidase S9B family.

The protein localises to the vacuole membrane. The catalysed reaction is Release of an N-terminal dipeptide, Xaa-Yaa-|-Zaa-, from a polypeptide, preferentially when Yaa is Pro, provided Zaa is neither Pro nor hydroxyproline.. Type IV dipeptidyl-peptidase which removes N-terminal dipeptides sequentially from polypeptides having unsubstituted N-termini provided that the penultimate residue is proline. This is Probable dipeptidyl-aminopeptidase B (DAPB) from Arthroderma benhamiae (strain ATCC MYA-4681 / CBS 112371) (Trichophyton mentagrophytes).